Here is a 304-residue protein sequence, read N- to C-terminus: ATP synthase gamma chain (304 aa).

The protein belongs to the ATPase gamma chain family. As to quaternary structure, F-type ATPases have 2 components, CF(1) - the catalytic core - and CF(0) - the membrane proton channel. CF(1) has five subunits: alpha(3), beta(3), gamma(1), delta(1), epsilon(1). CF(0) has three main subunits: a, b and c.

It localises to the cell membrane. In terms of biological role, produces ATP from ADP in the presence of a proton gradient across the membrane. The gamma chain is believed to be important in regulating ATPase activity and the flow of protons through the CF(0) complex. This Mycobacterium ulcerans (strain Agy99) protein is ATP synthase gamma chain.